The sequence spans 442 residues: Histidine--tRNA ligase (442 aa).

This sequence belongs to the class-II aminoacyl-tRNA synthetase family. In terms of assembly, homodimer.

It localises to the cytoplasm. It catalyses the reaction tRNA(His) + L-histidine + ATP = L-histidyl-tRNA(His) + AMP + diphosphate + H(+). The sequence is that of Histidine--tRNA ligase from Helicobacter hepaticus (strain ATCC 51449 / 3B1).